Here is a 210-residue protein sequence, read N- to C-terminus: Large ribosomal subunit protein bL25 (210 aa).

This sequence belongs to the bacterial ribosomal protein bL25 family. CTC subfamily. In terms of assembly, part of the 50S ribosomal subunit; part of the 5S rRNA/L5/L18/L25 subcomplex. Contacts the 5S rRNA. Binds to the 5S rRNA independently of L5 and L18.

Functionally, this is one of the proteins that binds to the 5S RNA in the ribosome where it forms part of the central protuberance. The chain is Large ribosomal subunit protein bL25 from Saccharophagus degradans (strain 2-40 / ATCC 43961 / DSM 17024).